Here is a 519-residue protein sequence, read N- to C-terminus: (3S,6E)-nerolidol synthase 1 (519 aa).

D273, D277, D417, S421, and E425 together coordinate Mg(2+). The DDXXD motif signature appears at D273–D277.

It belongs to the terpene synthase family. Tpsg subfamily. Requires Mg(2+) as cofactor. It depends on Mn(2+) as a cofactor. Expressed in receptacle tissue. Not detected in leaves or green fruit.

The protein localises to the cytoplasm. Its subcellular location is the cytosol. It catalyses the reaction (2E,6E)-farnesyl diphosphate + H2O = (3S,6E)-nerolidol + diphosphate. Its pathway is secondary metabolite biosynthesis; terpenoid biosynthesis. In terms of biological role, involved in monoterpene (C10) and sesquiterpene (C15) biosynthesis. Converts geranyl diphosphate (GPP) into S-linalool and farnesyl diphosphate (FPP) into (3S)-E-nerolidol. Exclusively present and highly expressed in the fruit of cultivated (octaploid) varieties. This chain is (3S,6E)-nerolidol synthase 1, found in Fragaria ananassa (Strawberry).